A 216-amino-acid polypeptide reads, in one-letter code: Pyridoxine/pyridoxamine 5'-phosphate oxidase (216 aa).

Residues 12–15 (RREY) and Lys70 contribute to the substrate site. FMN is bound by residues 65 to 70 (RLVLLK), 80 to 81 (YT), Arg86, Lys87, and Gln109. Positions 127, 131, and 135 each coordinate substrate. FMN is bound by residues 144–145 (QS) and Trp189. Substrate is bound at residue 195-197 (RLH). FMN is bound at residue Arg199.

Belongs to the pyridoxamine 5'-phosphate oxidase family. In terms of assembly, homodimer. The cofactor is FMN.

It carries out the reaction pyridoxamine 5'-phosphate + O2 + H2O = pyridoxal 5'-phosphate + H2O2 + NH4(+). The catalysed reaction is pyridoxine 5'-phosphate + O2 = pyridoxal 5'-phosphate + H2O2. It functions in the pathway cofactor metabolism; pyridoxal 5'-phosphate salvage; pyridoxal 5'-phosphate from pyridoxamine 5'-phosphate: step 1/1. Its pathway is cofactor metabolism; pyridoxal 5'-phosphate salvage; pyridoxal 5'-phosphate from pyridoxine 5'-phosphate: step 1/1. Its function is as follows. Catalyzes the oxidation of either pyridoxine 5'-phosphate (PNP) or pyridoxamine 5'-phosphate (PMP) into pyridoxal 5'-phosphate (PLP). The protein is Pyridoxine/pyridoxamine 5'-phosphate oxidase of Baumannia cicadellinicola subsp. Homalodisca coagulata.